The sequence spans 80 residues: Cytochrome c-553 (80 aa).

Heme c is bound by residues C13, C16, H17, and M58.

In terms of processing, binds 1 heme c group covalently per subunit.

It localises to the periplasm. Its function is as follows. Natural electron acceptor for a formate dehydrogenase. The protein is Cytochrome c-553 of Desulfomicrobium norvegicum (strain DSM 1741 / NCIMB 8310) (Desulfovibrio baculatus (strain Norway 4)).